A 145-amino-acid polypeptide reads, in one-letter code: D-aminoacyl-tRNA deacylase (145 aa).

A Gly-cisPro motif, important for rejection of L-amino acids motif is present at residues Gly137–Pro138.

This sequence belongs to the DTD family. In terms of assembly, homodimer.

The protein localises to the cytoplasm. It catalyses the reaction glycyl-tRNA(Ala) + H2O = tRNA(Ala) + glycine + H(+). The enzyme catalyses a D-aminoacyl-tRNA + H2O = a tRNA + a D-alpha-amino acid + H(+). An aminoacyl-tRNA editing enzyme that deacylates mischarged D-aminoacyl-tRNAs. Also deacylates mischarged glycyl-tRNA(Ala), protecting cells against glycine mischarging by AlaRS. Acts via tRNA-based rather than protein-based catalysis; rejects L-amino acids rather than detecting D-amino acids in the active site. By recycling D-aminoacyl-tRNA to D-amino acids and free tRNA molecules, this enzyme counteracts the toxicity associated with the formation of D-aminoacyl-tRNA entities in vivo and helps enforce protein L-homochirality. The sequence is that of D-aminoacyl-tRNA deacylase from Shewanella baltica (strain OS195).